The primary structure comprises 187 residues: Elongation factor P (187 aa).

This sequence belongs to the elongation factor P family.

It localises to the cytoplasm. Its pathway is protein biosynthesis; polypeptide chain elongation. Functionally, involved in peptide bond synthesis. Stimulates efficient translation and peptide-bond synthesis on native or reconstituted 70S ribosomes in vitro. Probably functions indirectly by altering the affinity of the ribosome for aminoacyl-tRNA, thus increasing their reactivity as acceptors for peptidyl transferase. The protein is Elongation factor P of Kocuria rhizophila (strain ATCC 9341 / DSM 348 / NBRC 103217 / DC2201).